We begin with the raw amino-acid sequence, 156 residues long: MPRRREVPKREILPDPKFGNVDVAKFVNVLMLSGKKSVAENIIYGAFEHIQTKSGKDPLEVFTAAIANCKPLVEVKSRRVGGANYQVPVEVRPVRRMALSMRWLREAANKRSEKSMPQRLAGELLEAAESRGGAMKKRDEVHRMAEANKAFSHFRF.

Belongs to the universal ribosomal protein uS7 family. In terms of assembly, part of the 30S ribosomal subunit. Contacts proteins S9 and S11.

In terms of biological role, one of the primary rRNA binding proteins, it binds directly to 16S rRNA where it nucleates assembly of the head domain of the 30S subunit. Is located at the subunit interface close to the decoding center, probably blocks exit of the E-site tRNA. This Janthinobacterium sp. (strain Marseille) (Minibacterium massiliensis) protein is Small ribosomal subunit protein uS7.